The chain runs to 506 residues: MEMTANRLIVFDTTLRDGEQCPGASMTSRQKLEVAKQLARLGVDVIEAGFPVISQGDFESVSEIAAQVKGPKICGLARCLPKDIEAAAEALKAAADAARIHVFLATSQIHRRFKLAKDEEEIVRIAVEGVRLAKRYVQDVEFSAEDASRTEPEFLAKIIQKVIEAGATTVNIPDTVGYAVPEEFASLIRYLFDHVQDIDKVVVSVHCHNDLGLAVSNSLAAIKAGARQVEGTINGIGERAGNAALEEIIMALHTRPDAFGKIETGIQLKEILRTSRLVSRMSGLAVQRNKAVVGENAFAHAAGIHQDGILKKRETYEIIDPKIIGWEQSELPLTKHSGRAALENRLKILGFELEKEEIDNIFSQFKQIGDKKKFIYDDDLVSLVEGQISRIKETYELEYVAVTVCSGGIPMATIKLRHGEEVLVDASTGDGAVDAAMKAVDRITGQHGHLVEYEVKSVTEGKDAIGEVTVKVNFDSKKLVTAKAASTDVIEASIKAYLNAVNKALL.

One can recognise a Pyruvate carboxyltransferase domain in the interval Leu-8–Leu-272. Positions 17, 206, 208, and 242 each coordinate Mn(2+). The interval Glu-396–Leu-506 is regulatory domain.

This sequence belongs to the alpha-IPM synthase/homocitrate synthase family. LeuA type 1 subfamily. As to quaternary structure, homodimer. Requires Mn(2+) as cofactor.

Its subcellular location is the cytoplasm. The enzyme catalyses 3-methyl-2-oxobutanoate + acetyl-CoA + H2O = (2S)-2-isopropylmalate + CoA + H(+). Its pathway is amino-acid biosynthesis; L-leucine biosynthesis; L-leucine from 3-methyl-2-oxobutanoate: step 1/4. Catalyzes the condensation of the acetyl group of acetyl-CoA with 3-methyl-2-oxobutanoate (2-ketoisovalerate) to form 3-carboxy-3-hydroxy-4-methylpentanoate (2-isopropylmalate). The protein is 2-isopropylmalate synthase of Methylacidiphilum infernorum (isolate V4) (Methylokorus infernorum (strain V4)).